The sequence spans 152 residues: Putative superoxide dismutase [Cu-Zn] (152 aa).

Cu cation-binding residues include histidine 43, histidine 45, and histidine 60. Cysteine 54 and cysteine 144 are oxidised to a cystine. Zn(2+) is bound by residues histidine 60, histidine 68, histidine 77, and aspartate 80. Histidine 118 provides a ligand contact to Cu cation.

The protein belongs to the Cu-Zn superoxide dismutase family. The cofactor is Cu cation. Requires Zn(2+) as cofactor.

It carries out the reaction 2 superoxide + 2 H(+) = H2O2 + O2. Its function is as follows. Destroys radicals which are normally produced within the cells and which are toxic to biological systems. In Orgyia pseudotsugata (Douglas-fir tussock moth), this protein is Putative superoxide dismutase [Cu-Zn] (SOD).